The following is a 399-amino-acid chain: S-adenosylmethionine synthase (399 aa).

ATP is bound at residue histidine 17. Aspartate 19 is a binding site for Mg(2+). K(+) is bound at residue glutamate 45. 2 residues coordinate L-methionine: glutamate 58 and glutamine 101. Residues 101-111 (QSADIAMGVDQ) are flexible loop. ATP is bound by residues 177 to 179 (DGK), 244 to 245 (RF), aspartate 253, 259 to 260 (RK), alanine 276, and lysine 280. Aspartate 253 is a binding site for L-methionine. Lysine 284 is an L-methionine binding site.

It belongs to the AdoMet synthase family. In terms of assembly, homotetramer; dimer of dimers. The cofactor is Mg(2+). K(+) is required as a cofactor.

The protein resides in the cytoplasm. The enzyme catalyses L-methionine + ATP + H2O = S-adenosyl-L-methionine + phosphate + diphosphate. It functions in the pathway amino-acid biosynthesis; S-adenosyl-L-methionine biosynthesis; S-adenosyl-L-methionine from L-methionine: step 1/1. Its function is as follows. Catalyzes the formation of S-adenosylmethionine (AdoMet) from methionine and ATP. The overall synthetic reaction is composed of two sequential steps, AdoMet formation and the subsequent tripolyphosphate hydrolysis which occurs prior to release of AdoMet from the enzyme. The sequence is that of S-adenosylmethionine synthase from Bacillus cereus (strain B4264).